The chain runs to 123 residues: Putative iron-sulfur cluster insertion protein ErpA (123 aa).

C51, C115, and C117 together coordinate iron-sulfur cluster.

This sequence belongs to the HesB/IscA family. As to quaternary structure, homodimer. Requires iron-sulfur cluster as cofactor.

Required for insertion of 4Fe-4S clusters. This Burkholderia cenocepacia (strain HI2424) protein is Putative iron-sulfur cluster insertion protein ErpA.